The following is a 356-amino-acid chain: Guanine nucleotide-binding protein alpha-17 subunit (356 aa).

Glycine 2 carries N-myristoyl glycine lipidation. Cysteine 4 carries the S-palmitoyl cysteine lipid modification. Residues 32-356 (SIVKLLLLGA…QKNLQKAGMM (325 aa)) enclose the G-alpha domain. The interval 35–48 (KLLLLGAGECGKST) is G1 motif. GTP is bound by residues 40 to 47 (GAGECGKS), 177 to 183 (LYSRVAT), 202 to 206 (DVGGQ), 271 to 274 (NKKD), and alanine 328. Residues serine 47 and threonine 183 each coordinate Mg(2+). The tract at residues 175-183 (DILYSRVAT) is G2 motif. Positions 198-207 (FRVFDVGGQR) are G3 motif. Positions 267-274 (ILFMNKKD) are G4 motif. Positions 326 to 331 (TCATDT) are G5 motif.

Belongs to the G-alpha family. In terms of assembly, g proteins are composed of 3 units; alpha, beta and gamma. The alpha chain contains the guanine nucleotide binding site.

Its subcellular location is the cell projection. The protein localises to the cilium. It localises to the dendrite. Its function is as follows. Guanine nucleotide-binding proteins (G proteins) are involved as modulators or transducers in various transmembrane signaling systems. This specific G-alpha subunit plays an important role in olfaction and in cilia morphogenesis. Involved in chemotactic responses to attractants diacetyl, pyrazine, 2,4,5-trimethylthiazole, benzaldehyde, isoamyl alcohol, butanone and 2,3-pentanedione. Displays a redundant function with gpa-3 in chemotactic responses. Involved in avoidance responses to copper, sodium dodecyl sulfate and linoleic acid. Involved in osmotic avoidance and mechanosensory responses. Involved in specifying fan-like morphology of cilia of head sensory neurons AWC. This chain is Guanine nucleotide-binding protein alpha-17 subunit (odr-3), found in Caenorhabditis briggsae.